A 337-amino-acid polypeptide reads, in one-letter code: Mortality factor related protein 1 (337 aa).

Residues Phe7–Pro55 enclose the Tudor-knot domain. The segment at His75–Lys113 is disordered. The 206-residue stretch at Thr122–Leu327 folds into the MRG domain.

Component of the SIN3S complex, which contains at least sin-3, hda-1, athp-1 and mrg-1. Interacts with cfp-1, a component of the SET2 complex. Interacts with rfp-1. As to expression, expressed in oocytes (at protein level). Expressed mainly in germ cells, but also at lower levels in several somatic cell types, including intestinal cells.

It localises to the nucleus. Its subcellular location is the chromosome. In terms of biological role, protein involved in the remodeling of chromatin thereby regulating various processes including transcription, chromosome synapsis and genome integrity. Mainly binds genomic loci carrying trimethylated histone H3 'Lys-36' (H3K36me3) or 'Lys-4' (H3K4me3), and acetylated histone H3 'Lys-9' (H3K9ac), 'Lys-27' (H3K27ac). During meiosis, required for the presynaptic pairing of homologous chromosomal regions outside of the pairing center and for the progression of chromosome synapsis. Essential maternal factor required in postembryonic germline development and in maintaining germ cell identity. Plays an important role in maintaining genomic integrity in primordial germ cells (PGCs) during meiosis by regulating DNA double-strand break (DSB) repair and synapsis. Also, required for chromatin-based transcriptional silencing in PGCs and for silencing of X-linked genes in the maternal germ line. By retaining histone acetyltransferase, cbp-1, in euchromatin, promotes the anchoring of heterochromatin at the inner nuclear membrane in intestinal and hypodermal cells. The sequence is that of Mortality factor related protein 1 from Caenorhabditis elegans.